Here is a 1872-residue protein sequence, read N- to C-terminus: Chitin synthase 6 (1872 aa).

Positions 1–23 (MAQHLPPVGGNGGAHTQPSLPAL) are disordered. Residues 1-779 (MAQHLPPVGG…CWMEIAQLSD (779 aa)) form the Myosin motor domain. Position 104–111 (104–111 (GESGSGKT)) interacts with ATP. N-linked (GlcNAc...) asparagine glycosylation is found at asparagine 123, asparagine 291, asparagine 428, and asparagine 559. Residues 587–652 (VMQASVSSKP…VNKPSEEGAS (66 aa)) form a disordered region. The tract at residues 659–683 (LDNVTKSFHAQNTNAYFVFCLKPND) is actin-binding. The N-linked (GlcNAc...) asparagine glycan is linked to asparagine 661. A run of 2 helical transmembrane segments spans residues 881–901 (WVFITWMLTFFVPEFLIQHLG) and 920–940 (FIIWFSCLAAAFILVVFPMLV). Residues 944-1003 (QYVFTGEELSAYNGKDGKASYAAIRGQVFDIGSFIPRHPLPYLPSKLFTQYAGTDITGLF) form the Cytochrome b5 heme-binding domain. N-linked (GlcNAc...) asparagine glycans are attached at residues asparagine 1030, asparagine 1055, and asparagine 1120. Residues 1193–1213 (FILAVTIILCSIIAFKFLAAL) form a helical membrane-spanning segment. Asparagine 1450 and asparagine 1556 each carry an N-linked (GlcNAc...) asparagine glycan. 3 helical membrane-spanning segments follow: residues 1581–1601 (FIVFIDLLSTIIQPVTIAYIV), 1614–1634 (VPVLAFVLLAAVYGLQAIIFI), and 1641–1661 (MIAWMILYIIAMPIFSFGLPL). A DEK-C domain is found at 1814–1869 (LPSDDALLAEIREILRTADLMTVTKKGVKQELERRFGVNLDSRRAYINSATEALLS).

Belongs to the chitin synthase family. Class V subfamily.

It is found in the cell membrane. It catalyses the reaction [(1-&gt;4)-N-acetyl-beta-D-glucosaminyl](n) + UDP-N-acetyl-alpha-D-glucosamine = [(1-&gt;4)-N-acetyl-beta-D-glucosaminyl](n+1) + UDP + H(+). Functionally, polymerizes chitin, a structural polymer of the cell wall and septum, by transferring the sugar moiety of UDP-GlcNAc to the non-reducing end of the growing chitin polymer. Required for appressorium penetration and invasive growth. The protein is Chitin synthase 6 of Pyricularia oryzae (strain 70-15 / ATCC MYA-4617 / FGSC 8958) (Rice blast fungus).